The sequence spans 125 residues: Large ribosomal subunit protein mL51 (125 aa).

A mitochondrion-targeting transit peptide spans 1-29 (MWSVQQLLWGCRSLLTQGCRSFSLGSRDL).

The protein belongs to the mitochondrion-specific ribosomal protein mL51 family. In terms of assembly, component of the mitochondrial ribosome large subunit (39S) which comprises a 16S rRNA and about 50 distinct proteins.

It is found in the mitochondrion. This Xenopus tropicalis (Western clawed frog) protein is Large ribosomal subunit protein mL51 (mrpl51).